Consider the following 219-residue polypeptide: Transmembrane emp24 domain-containing protein 10 (219 aa).

An N-terminal signal peptide occupies residues 1 to 31 (MSGWSGPLARRGPGPLALLFLFLLGPSSVLA). Positions 1-142 (MSGWSGPLAR…KNYEEIAKVE (142 aa)) are required for interaction with STX17. Over 32-185 (ISFHLPVNSR…RDTNESTNTR (154 aa)) the chain is Lumenal. The 153-residue stretch at 41-193 (RKCLREEIHK…TRVLYFSIFS (153 aa)) folds into the GOLD domain. Positions 147-178 (LEVELRRLEDLSESIVNDFAYMKKREEEMRDT) are required for TMED10 and TMED2 cis-Golgi network localization. 2 positions are modified to dimethylated arginine: R171 and R176. N179 carries an N-linked (GlcNAc...) asparagine glycan. The helical transmembrane segment at 186–206 (VLYFSIFSMFCLIGLATWQVF) threads the bilayer. The tract at residues 204–219 (QVFYLRRFFKAKKLIE) is interaction with COPG1. Topologically, residues 207–219 (YLRRFFKAKKLIE) are cytoplasmic. Residues 207 to 219 (YLRRFFKAKKLIE) are interaction with ARF1 and IL1B. The short motif at 211–212 (FF) is the COPII vesicle coat-binding element. The COPI vesicle coat-binding signature appears at 211–219 (FFKAKKLIE).

Belongs to the EMP24/GP25L family. As to quaternary structure, predominantly dimeric and to a lesser extent monomeric in the ER. Monomer and dimer in ERGIC and cis-Golgi network. Forms homooligomer (via GOLD domain); the assembly is promoted by direct binding with leaderless cargos and may form a protein channel that facilitates cargo entry into the ERGIC. Forms heterooligomeric complexes with other members of the p24 family such as TMED2, TMED7 and TMED9. Interacts (via GOLD domain) with TMED2 (via GOLD domain); the complex is required for export of TMED10 from the ER to the cis-Golgi network; the complex is proposed to be involved in cis-Golgi network dynamics and / or biogenesis. Associates with the COPI vesicle coat subunits (coatomer). Tetramerization of the cytoplasmic domain at the Golgi membrane in vitro; the complex is proposed to interact with COPI coatomer and induce budding of the vesicles. Interacts with COPG1; the interaction involves TMED10 homodimer. Interacts with ARF1 (GDP-bound); the interaction probably involves a TMED10 oligomer. Interacts with SEC23A, SEC24B, SEC24C and SEC24D components of the coat protein complex II/COPII, indicative of an association of TMED10 with the COPII vesicle coat. Interacts with CD59. Interacts with MPPE1/PGAP5; the complex might recruit and sort GPI-anchored proteins to the ER-exit site, or the interaction might lead to recycling of PGAP5 between the ER and the Golgi. Interacts with F2LR1/PAR2. Interacts with KDELR2/ERD2; the interaction is disrupted by KDELR2 ligand. Found in a complex composed at least of SURF4, TMED2 and TMED10. Associates with the presenilin-dependent gamma-secretase complex. Interacts with STX17; the interaction is direct. Interacts with IL-1; the interaction is direct. Interacts with RAB21 (active GTP-bound form); the interaction is indirect and regulates TMED10 abundance and localization at the Golgi.

It localises to the endoplasmic reticulum membrane. Its subcellular location is the endoplasmic reticulum-Golgi intermediate compartment membrane. The protein localises to the golgi apparatus membrane. It is found in the golgi apparatus. The protein resides in the cis-Golgi network membrane. It localises to the trans-Golgi network membrane. Its subcellular location is the cytoplasmic vesicle. The protein localises to the secretory vesicle membrane. It is found in the cell membrane. The protein resides in the melanosome. Functionally, cargo receptor involved in protein vesicular trafficking and quality control in the endoplasmic reticulum (ER) and Golgi. The p24 protein family is a group of transmembrane proteins that bind coat protein complex I/COPI and coat protein complex II/COPII involved in vesicular trafficking between the membranes. Acts at the lumenal side for incorporation of secretory cargo molecules into transport vesicles and involved in vesicle coat formation at the cytoplasmic side. Mainly functions in the early secretory pathway and cycles between the ER, ER-Golgi intermediate compartment (ERGIC) and Golgi, mediating cargo transport through COPI and COPII-coated vesicles. In COPII vesicle-mediated anterograde transport, involved in the transport of GPI-anchored proteins by acting together with TMED2 as their cargo receptor; the function specifically implies SEC24C and SEC24D of the COPII vesicle coat and lipid raft-like microdomains of the ER. Recognizes GPI anchors structural remodeled in the ER by the GPI inositol-deacylase/PGAP1 and the metallophosphoesterase MPPE1/PGAP5. In COPI vesicle-mediated retrograde transport, involved in the biogenesis of COPI vesicles and vesicle coat recruitment. Involved in trafficking of amyloid beta A4 protein and soluble APP-beta release (independent from the modulation of gamma-secretase activity). Involved in the KDELR2-mediated retrograde transport of the toxin A subunit (CTX-A-K63)together with COPI and the COOH terminus of KDELR2. On Golgi membranes, acts as a primary receptor for ARF1-GDP, a GTP-binding protein involved in COPI-vesicle formation. Increases coatomer-dependent GTPase-activating activity of ARFGAP2 which mediates the hydrolysis of ARF1-bound GTP and therefore modulates protein trafficking from the Golgi apparatus. Involved in the exocytic trafficking of G protein-coupled receptors F2LR1/PAR2 (trypsin and tryspin-like enzyme receptor), OPRM1 (opioid receptor) and P2RY4 (UTD and UDP receptor) from the Golgi to the plasma membrane, thus contributing to receptor resensitization. In addition to its cargo receptor activity, may also act as a protein channel after oligomerization, facilitating the post-translational entry of leaderless cytoplasmic cargo into the ERGIC. Involved in the translocation into ERGIC, the vesicle entry and the secretion of leaderless cargos (lacking the secretion signal sequence), including the mature form of interleukin 1/IL-1 family members, the alpha-crystallin B chain HSPB5, the carbohydrate-binding proteins galectin-1/LGALS1 and galectin-3/LGALS3, the microtubule-associated protein Tau/MAPT, and the annexin A1/ANXA1; the translocation process is dependent on cargo protein unfolding and enhanced by chaperones HSP90AB1 and HSP90B1/GRP9. Could also associates with the presenilin-dependent gamma-secretase complex in order to regulate gamma-cleavages of the amyloid beta A4 protein to yield amyloid-beta 40/Abeta40. This chain is Transmembrane emp24 domain-containing protein 10 (TMED10), found in Oryctolagus cuniculus (Rabbit).